Here is a 765-residue protein sequence, read N- to C-terminus: Phosphoribosylformylglycinamidine synthase subunit PurL (765 aa).

Polar residues predominate over residues 1–13 (MTVSPTSAPTQAI). The tract at residues 1–32 (MTVSPTSAPTQAIDTVERAATTPDEPQPFGEL) is disordered. Residue His-65 is part of the active site. Residues Tyr-68 and Lys-112 each contribute to the ATP site. A Mg(2+)-binding site is contributed by Glu-114. Substrate-binding positions include 115 to 118 (SHNH) and Arg-137. Catalysis depends on His-116, which acts as the Proton acceptor. Position 138 (Asp-138) interacts with Mg(2+). Gln-263 lines the substrate pocket. Position 291 (Asp-291) interacts with Mg(2+). Residue 335–337 (ESQ) participates in substrate binding. Positions 523 and 560 each coordinate ATP. Asn-561 is a Mg(2+) binding site. Ser-563 contributes to the substrate binding site.

Belongs to the FGAMS family. In terms of assembly, monomer. Part of the FGAM synthase complex composed of 1 PurL, 1 PurQ and 2 PurS subunits.

The protein resides in the cytoplasm. The catalysed reaction is N(2)-formyl-N(1)-(5-phospho-beta-D-ribosyl)glycinamide + L-glutamine + ATP + H2O = 2-formamido-N(1)-(5-O-phospho-beta-D-ribosyl)acetamidine + L-glutamate + ADP + phosphate + H(+). It functions in the pathway purine metabolism; IMP biosynthesis via de novo pathway; 5-amino-1-(5-phospho-D-ribosyl)imidazole from N(2)-formyl-N(1)-(5-phospho-D-ribosyl)glycinamide: step 1/2. Functionally, part of the phosphoribosylformylglycinamidine synthase complex involved in the purines biosynthetic pathway. Catalyzes the ATP-dependent conversion of formylglycinamide ribonucleotide (FGAR) and glutamine to yield formylglycinamidine ribonucleotide (FGAM) and glutamate. The FGAM synthase complex is composed of three subunits. PurQ produces an ammonia molecule by converting glutamine to glutamate. PurL transfers the ammonia molecule to FGAR to form FGAM in an ATP-dependent manner. PurS interacts with PurQ and PurL and is thought to assist in the transfer of the ammonia molecule from PurQ to PurL. This Mycolicibacterium paratuberculosis (strain ATCC BAA-968 / K-10) (Mycobacterium paratuberculosis) protein is Phosphoribosylformylglycinamidine synthase subunit PurL.